The following is a 990-amino-acid chain: Bifunctional glutamine synthetase adenylyltransferase/adenylyl-removing enzyme (990 aa).

Positions 1–474 are adenylyl removase; sequence MIFSAITADL…HYAKLFEGDP (474 aa). Residues 478 to 990 form an adenylyl transferase region; the sequence is AKLPPVDYGA…FSRLIGGEDA (513 aa).

It belongs to the GlnE family. Requires Mg(2+) as cofactor.

It catalyses the reaction [glutamine synthetase]-O(4)-(5'-adenylyl)-L-tyrosine + phosphate = [glutamine synthetase]-L-tyrosine + ADP. It carries out the reaction [glutamine synthetase]-L-tyrosine + ATP = [glutamine synthetase]-O(4)-(5'-adenylyl)-L-tyrosine + diphosphate. Involved in the regulation of glutamine synthetase GlnA, a key enzyme in the process to assimilate ammonia. When cellular nitrogen levels are high, the C-terminal adenylyl transferase (AT) inactivates GlnA by covalent transfer of an adenylyl group from ATP to specific tyrosine residue of GlnA, thus reducing its activity. Conversely, when nitrogen levels are low, the N-terminal adenylyl removase (AR) activates GlnA by removing the adenylyl group by phosphorolysis, increasing its activity. The regulatory region of GlnE binds the signal transduction protein PII (GlnB) which indicates the nitrogen status of the cell. This chain is Bifunctional glutamine synthetase adenylyltransferase/adenylyl-removing enzyme, found in Rhodopseudomonas palustris (strain ATCC BAA-98 / CGA009).